Here is a 307-residue protein sequence, read N- to C-terminus: Reaction center protein M chain (307 aa).

The next 3 helical transmembrane spans lie at 52–78, 110–139, and 142–167; these read LGIAGTVSLAFGAAWFFTIGVWYWYQA, QGGVWQIASLFMAISVIAWWVRVYTRADQL, and GKHMAWAFLSAIWLWSVLGFWRPILM. The (7R,8Z)-bacteriochlorophyll b site is built by H181 and H201. The chain crosses the membrane as a helical span at residues 197–225; the sequence is YNPFHGLSIAALYGSALLFAMHGATILAV. H218 and E233 together coordinate Fe cation. W251 contributes to the a ubiquinone binding site. A helical membrane pass occupies residues 259–285; the sequence is ATMEGIHRWAIWMAVMVTLTGGIGILL. Fe cation is bound at residue H265.

This sequence belongs to the reaction center PufL/M/PsbA/D family. As to quaternary structure, reaction center is composed of four bacteriochlorophylls, two bacteriopheophytins, two ubiquinones, one iron, and three highly hydrophobic polypeptide chains (designated L, M, and H).

It is found in the cellular chromatophore membrane. The reaction center is a membrane-bound complex that mediates the initial photochemical event in the electron transfer process of photosynthesis. The chain is Reaction center protein M chain (pufM) from Rhodobacter capsulatus (Rhodopseudomonas capsulata).